The sequence spans 432 residues: Transcriptional adapter 3-B (432 aa).

Disordered stretches follow at residues His-90–Arg-124 and Ser-275–Glu-315. Polar residues predominate over residues Asp-293 to Pro-305. Residues Ala-335–Ile-398 are a coiled coil.

This sequence belongs to the NGG1 family.

Its subcellular location is the nucleus. Functions as a component of the PCAF complex. The PCAF complex is capable of efficiently acetylating histones in a nucleosomal context. This is Transcriptional adapter 3-B (tada3-b) from Xenopus laevis (African clawed frog).